The sequence spans 597 residues: Elongation factor 4 (597 aa).

The tr-type G domain occupies 2 to 184 (QHIRNFSIIA…SIVARVPPPK (183 aa)). GTP is bound by residues 14–19 (DHGKST) and 131–134 (NKMD).

It belongs to the TRAFAC class translation factor GTPase superfamily. Classic translation factor GTPase family. LepA subfamily.

The protein localises to the cell inner membrane. It carries out the reaction GTP + H2O = GDP + phosphate + H(+). Functionally, required for accurate and efficient protein synthesis under certain stress conditions. May act as a fidelity factor of the translation reaction, by catalyzing a one-codon backward translocation of tRNAs on improperly translocated ribosomes. Back-translocation proceeds from a post-translocation (POST) complex to a pre-translocation (PRE) complex, thus giving elongation factor G a second chance to translocate the tRNAs correctly. Binds to ribosomes in a GTP-dependent manner. The polypeptide is Elongation factor 4 (Bordetella bronchiseptica (strain ATCC BAA-588 / NCTC 13252 / RB50) (Alcaligenes bronchisepticus)).